The chain runs to 436 residues: MAKIVKVIGREIIDSRGNPTVEAEVHLEGGFVGLAAAPSGASTGSREALELRDGDKSRFLGKGVLKAVAAVNNEIAQAIVGKDATNQAEIDQIMIDLDGTENKSNFGANAILAVSLANAKAAAASKGLPLYAYIAELNGTAGVYSMPLPMMNIINGGEHADNNVDIQEFMIQPVGAKTLREALRIGAEVFHNLAKVLKAKGMSTAVGDEGGFAPNLASNADALACIKEAVEKAGYVLGKDVTLAMDCASSEFYNKENGMYEMKGEGKSFTSQEFTHYLEELCKEYPIVSIEDGQDESDWEGFAYQTKVLGDRVQLVGDDLFVTNTKILKEGIEKGIANSILIKFNQIGSLTETLAAIKMAKDAGYTAVISHRSGETEDATIADLAVGTAAGQIKTGSMSRSDRIAKYNQLIRIEEALERAGTPAAFPGLKAVKGQA.

Gln167 contributes to the (2R)-2-phosphoglycerate binding site. Glu209 serves as the catalytic Proton donor. Mg(2+) contacts are provided by Asp246, Glu291, and Asp318. 4 residues coordinate (2R)-2-phosphoglycerate: Lys343, Arg372, Ser373, and Lys394. The active-site Proton acceptor is Lys343.

It belongs to the enolase family. Component of the RNA degradosome, a multiprotein complex involved in RNA processing and mRNA degradation. Requires Mg(2+) as cofactor.

It localises to the cytoplasm. The protein localises to the secreted. It is found in the cell surface. The catalysed reaction is (2R)-2-phosphoglycerate = phosphoenolpyruvate + H2O. It functions in the pathway carbohydrate degradation; glycolysis; pyruvate from D-glyceraldehyde 3-phosphate: step 4/5. Catalyzes the reversible conversion of 2-phosphoglycerate (2-PG) into phosphoenolpyruvate (PEP). It is essential for the degradation of carbohydrates via glycolysis. The chain is Enolase from Haemophilus influenzae (strain PittGG).